An 88-amino-acid chain; its full sequence is Small ribosomal subunit protein uS15 (88 aa).

It belongs to the universal ribosomal protein uS15 family. As to quaternary structure, part of the 30S ribosomal subunit. Forms a bridge to the 50S subunit in the 70S ribosome, contacting the 23S rRNA.

In terms of biological role, one of the primary rRNA binding proteins, it binds directly to 16S rRNA where it helps nucleate assembly of the platform of the 30S subunit by binding and bridging several RNA helices of the 16S rRNA. Forms an intersubunit bridge (bridge B4) with the 23S rRNA of the 50S subunit in the ribosome. The polypeptide is Small ribosomal subunit protein uS15 (Leptospira interrogans serogroup Icterohaemorrhagiae serovar copenhageni (strain Fiocruz L1-130)).